The chain runs to 209 residues: Cytidylate kinase (209 aa).

7–15 is a binding site for ATP; that stretch reads GVAASGKSS.

The protein belongs to the cytidylate kinase family. Type 1 subfamily.

It localises to the cytoplasm. It carries out the reaction CMP + ATP = CDP + ADP. The catalysed reaction is dCMP + ATP = dCDP + ADP. This is Cytidylate kinase from Deinococcus geothermalis (strain DSM 11300 / CIP 105573 / AG-3a).